We begin with the raw amino-acid sequence, 253 residues long: Light-harvesting complex stress-related protein 1, chloroplastic (253 aa).

The transit peptide at 1–39 (MAMMMRKAAAVPASSRRSVAVNSVSGKRTVSGKAGAPVP) directs the protein to the chloroplast. A chlorophyll b-binding site is contributed by tyrosine 45. Positions 60, 81, and 84 each coordinate chlorophyll a. A chlorophyll b-binding site is contributed by arginine 86. A helical transmembrane segment spans residues 87–107 (VAMLAALGFIVGEQLQDFPLF). Glutamine 124 is a chlorophyll a binding site. A helical transmembrane segment spans residues 131–151 (EPLLIAIGVAESYRVAVGWAT). Residues glutamate 141 and arginine 144 each contribute to the chlorophyll b site. Chlorophyll a-binding residues include lysine 190, glutamate 191, asparagine 194, arginine 196, and glutamine 208. Residues 197-217 (LAMIAIAAFVAQELVEQTEIF) form a helical membrane-spanning segment.

It belongs to the light-harvesting chlorophyll a/b-binding (LHC) protein family.

The protein localises to the plastid. The protein resides in the chloroplast thylakoid membrane. Functionally, required for non-photochemical quenching (NPQ), a mechanism that converts and dissipates the harmful excess absorbed light energy into heat and protect the photosynthetic apparatus from photo-oxidative damage. Is able to sense luminal acidification of the thylakoid membranes, which occurs along with elevated electron flow caused by excess light, and to induce a large, fast, and reversible pH-dependent quenching in LHCII-containing membranes. Mediates excitation energy transfer from light-harvesting complex II (LHCII) to photosystem I (PSI), rather than photosystem II (PSII), at low pH, which mimics the acidified lumen of the thylakoid membranes in high light-exposed chloroplasts. Activates PSI-dependent fluorescence quenching in addition to dissipating excitation energy in LHCII to avoid photooxidative stress under excess light. The sequence is that of Light-harvesting complex stress-related protein 1, chloroplastic from Chlamydomonas reinhardtii (Chlamydomonas smithii).